We begin with the raw amino-acid sequence, 260 residues long: Flavin-dependent thymidylate synthase (260 aa).

Residues 1-202 (MKIKLVSYSK…PRLFKYAGPN (202 aa)) form the ThyX domain. FAD-binding positions include S55, 79 to 81 (RHR), and Q87. DUMP contacts are provided by residues 76-79 (QLVR), 87-91 (QMSHR), and R141. A ThyX motif motif is present at residues 79 to 89 (RHRIASYTQMS). FAD-binding positions include 157-159 (NAR) and N163. A dUMP-binding site is contributed by R168. The Involved in ionization of N3 of dUMP, leading to its activation role is filled by R168.

The protein belongs to the thymidylate synthase ThyX family. As to quaternary structure, homotetramer. It depends on FAD as a cofactor.

It catalyses the reaction dUMP + (6R)-5,10-methylene-5,6,7,8-tetrahydrofolate + NADPH + H(+) = dTMP + (6S)-5,6,7,8-tetrahydrofolate + NADP(+). It functions in the pathway pyrimidine metabolism; dTTP biosynthesis. Its function is as follows. Catalyzes the reductive methylation of 2'-deoxyuridine-5'-monophosphate (dUMP) to 2'-deoxythymidine-5'-monophosphate (dTMP) while utilizing 5,10-methylenetetrahydrofolate (mTHF) as the methyl donor, and NADPH and FADH(2) as the reductant. In Sulfolobus acidocaldarius (strain ATCC 33909 / DSM 639 / JCM 8929 / NBRC 15157 / NCIMB 11770), this protein is Flavin-dependent thymidylate synthase.